Here is a 468-residue protein sequence, read N- to C-terminus: Ribosomal lysine N-methyltransferase 4 (468 aa).

Positions 22–302 (EKIGLNDYRH…KGEQLWNTYG (281 aa)) constitute an SET domain. Positions 188 to 225 (ISNENEKSAAETSIKEDKNGDAAKKNEGSANQDDEKLH) are disordered. Tyr301 is a binding site for S-adenosyl-L-methionine.

This sequence belongs to the class V-like SAM-binding methyltransferase superfamily. Histone-lysine methyltransferase family. SETD6 subfamily.

It localises to the nucleus. In terms of biological role, S-adenosyl-L-methionine-dependent protein-lysine N-methyltransferase that monomethylates 60S ribosomal protein L42 (rpl42) at 'Lys-55'. The protein is Ribosomal lysine N-methyltransferase 4 of Schizosaccharomyces pombe (strain 972 / ATCC 24843) (Fission yeast).